Here is a 295-residue protein sequence, read N- to C-terminus: Pyridoxal 5'-phosphate synthase subunit PdxS (295 aa).

A D-ribose 5-phosphate-binding site is contributed by Asp25. Lys82 acts as the Schiff-base intermediate with D-ribose 5-phosphate in catalysis. A D-ribose 5-phosphate-binding site is contributed by Gly154. Arg166 lines the D-glyceraldehyde 3-phosphate pocket. Residues Gly215 and 236–237 each bind D-ribose 5-phosphate; that span reads GS.

It belongs to the PdxS/SNZ family. In the presence of PdxT, forms a dodecamer of heterodimers.

The enzyme catalyses aldehydo-D-ribose 5-phosphate + D-glyceraldehyde 3-phosphate + L-glutamine = pyridoxal 5'-phosphate + L-glutamate + phosphate + 3 H2O + H(+). It functions in the pathway cofactor biosynthesis; pyridoxal 5'-phosphate biosynthesis. Its function is as follows. Catalyzes the formation of pyridoxal 5'-phosphate from ribose 5-phosphate (RBP), glyceraldehyde 3-phosphate (G3P) and ammonia. The ammonia is provided by the PdxT subunit. Can also use ribulose 5-phosphate and dihydroxyacetone phosphate as substrates, resulting from enzyme-catalyzed isomerization of RBP and G3P, respectively. This Staphylococcus aureus (strain Mu3 / ATCC 700698) protein is Pyridoxal 5'-phosphate synthase subunit PdxS.